Consider the following 197-residue polypeptide: Peptidyl-tRNA hydrolase (197 aa).

Tyrosine 17 provides a ligand contact to tRNA. Residue histidine 22 is the Proton acceptor of the active site. Residues phenylalanine 68, asparagine 70, and asparagine 116 each coordinate tRNA.

Belongs to the PTH family. Monomer.

The protein localises to the cytoplasm. The catalysed reaction is an N-acyl-L-alpha-aminoacyl-tRNA + H2O = an N-acyl-L-amino acid + a tRNA + H(+). Its function is as follows. Hydrolyzes ribosome-free peptidyl-tRNAs (with 1 or more amino acids incorporated), which drop off the ribosome during protein synthesis, or as a result of ribosome stalling. Catalyzes the release of premature peptidyl moieties from peptidyl-tRNA molecules trapped in stalled 50S ribosomal subunits, and thus maintains levels of free tRNAs and 50S ribosomes. The sequence is that of Peptidyl-tRNA hydrolase from Yersinia enterocolitica serotype O:8 / biotype 1B (strain NCTC 13174 / 8081).